Consider the following 345-residue polypeptide: Myb/SANT-like DNA-binding domain-containing protein 4 (345 aa).

The region spanning 4–77 (LKRKRKSNFS…EVKRRYLDWR (74 aa)) is the Myb-like domain. Residue lysine 9 forms a Glycyl lysine isopeptide (Lys-Gly) (interchain with G-Cter in SUMO2) linkage. Serine 106 is modified (phosphoserine). Residues lysine 114 and lysine 142 each participate in a glycyl lysine isopeptide (Lys-Gly) (interchain with G-Cter in SUMO2) cross-link. Residues 139-175 (TEVKVEEEERDPQSPEFEIEEEEEMLSSVIPDSRREN) form a disordered region. Threonine 188 carries the post-translational modification Phosphothreonine. Positions 202-344 (HLLMNIEKQK…RLRIQKEGHL (143 aa)) form a coiled coil. Glycyl lysine isopeptide (Lys-Gly) (interchain with G-Cter in SUMO2) cross-links involve residues lysine 237, lysine 254, and lysine 273.

This chain is Myb/SANT-like DNA-binding domain-containing protein 4 (Msantd4), found in Mus musculus (Mouse).